The following is a 209-amino-acid chain: Uracil phosphoribosyltransferase (209 aa).

Residues arginine 79, arginine 104, and 131–139 (DPMLATGNS) contribute to the 5-phospho-alpha-D-ribose 1-diphosphate site. Residues isoleucine 194 and 199–201 (GDA) each bind uracil. Position 200 (aspartate 200) interacts with 5-phospho-alpha-D-ribose 1-diphosphate.

It belongs to the UPRTase family. Mg(2+) is required as a cofactor.

The enzyme catalyses UMP + diphosphate = 5-phospho-alpha-D-ribose 1-diphosphate + uracil. It functions in the pathway pyrimidine metabolism; UMP biosynthesis via salvage pathway; UMP from uracil: step 1/1. Its activity is regulated as follows. Allosterically activated by GTP. Functionally, catalyzes the conversion of uracil and 5-phospho-alpha-D-ribose 1-diphosphate (PRPP) to UMP and diphosphate. The polypeptide is Uracil phosphoribosyltransferase (Sinorhizobium fredii (strain NBRC 101917 / NGR234)).